The chain runs to 154 residues: Aspartate carbamoyltransferase regulatory chain (154 aa).

Zn(2+) contacts are provided by C109, C114, C138, and C141.

This sequence belongs to the PyrI family. In terms of assembly, contains catalytic and regulatory chains. Zn(2+) is required as a cofactor.

Involved in allosteric regulation of aspartate carbamoyltransferase. The chain is Aspartate carbamoyltransferase regulatory chain from Tolumonas auensis (strain DSM 9187 / NBRC 110442 / TA 4).